The primary structure comprises 359 residues: Heme A synthase (359 aa).

The next 5 helical transmembrane spans lie at 8-28 (IMSI…VVGG), 94-114 (LLGR…YYLK), 124-144 (LLLI…MVKS), 159-179 (GHLL…LIII), and 215-235 (IIIF…GLDA). His-274 is a binding site for heme. 3 helical membrane-spanning segments follow: residues 276-296 (WFGI…IILN), 303-323 (MGMV…ITLV), and 328-348 (ILAA…FLFI). His-334 is a heme binding site.

It belongs to the COX15/CtaA family. Type 2 subfamily. Interacts with CtaB. The cofactor is heme b.

The protein resides in the cell membrane. The enzyme catalyses Fe(II)-heme o + 2 A + H2O = Fe(II)-heme a + 2 AH2. Its pathway is porphyrin-containing compound metabolism; heme A biosynthesis; heme A from heme O: step 1/1. Its function is as follows. Catalyzes the conversion of heme O to heme A by two successive hydroxylations of the methyl group at C8. The first hydroxylation forms heme I, the second hydroxylation results in an unstable dihydroxymethyl group, which spontaneously dehydrates, resulting in the formyl group of heme A. The protein is Heme A synthase of Orientia tsutsugamushi (strain Ikeda) (Rickettsia tsutsugamushi).